The following is a 314-amino-acid chain: Lipoyl synthase (314 aa).

Cys60, Cys65, Cys71, Cys86, Cys90, Cys93, and Ser300 together coordinate [4Fe-4S] cluster. The region spanning 72–289 (FRKGTATFMI…RQFGLSIGFS (218 aa)) is the Radical SAM core domain.

It belongs to the radical SAM superfamily. Lipoyl synthase family. It depends on [4Fe-4S] cluster as a cofactor.

It is found in the cytoplasm. It catalyses the reaction [[Fe-S] cluster scaffold protein carrying a second [4Fe-4S](2+) cluster] + N(6)-octanoyl-L-lysyl-[protein] + 2 oxidized [2Fe-2S]-[ferredoxin] + 2 S-adenosyl-L-methionine + 4 H(+) = [[Fe-S] cluster scaffold protein] + N(6)-[(R)-dihydrolipoyl]-L-lysyl-[protein] + 4 Fe(3+) + 2 hydrogen sulfide + 2 5'-deoxyadenosine + 2 L-methionine + 2 reduced [2Fe-2S]-[ferredoxin]. It participates in protein modification; protein lipoylation via endogenous pathway; protein N(6)-(lipoyl)lysine from octanoyl-[acyl-carrier-protein]: step 2/2. Catalyzes the radical-mediated insertion of two sulfur atoms into the C-6 and C-8 positions of the octanoyl moiety bound to the lipoyl domains of lipoate-dependent enzymes, thereby converting the octanoylated domains into lipoylated derivatives. This chain is Lipoyl synthase, found in Pelobacter propionicus (strain DSM 2379 / NBRC 103807 / OttBd1).